Consider the following 513-residue polypeptide: ATP synthase subunit alpha (513 aa).

169 to 176 (GDRQIGKS) is a binding site for ATP.

The protein belongs to the ATPase alpha/beta chains family. As to quaternary structure, F-type ATPases have 2 components, CF(1) - the catalytic core - and CF(0) - the membrane proton channel. CF(1) has five subunits: alpha(3), beta(3), gamma(1), delta(1), epsilon(1). CF(0) has three main subunits: a(1), b(2) and c(9-12). The alpha and beta chains form an alternating ring which encloses part of the gamma chain. CF(1) is attached to CF(0) by a central stalk formed by the gamma and epsilon chains, while a peripheral stalk is formed by the delta and b chains.

It localises to the cell inner membrane. The enzyme catalyses ATP + H2O + 4 H(+)(in) = ADP + phosphate + 5 H(+)(out). Functionally, produces ATP from ADP in the presence of a proton gradient across the membrane. The alpha chain is a regulatory subunit. The protein is ATP synthase subunit alpha of Colwellia psychrerythraea (strain 34H / ATCC BAA-681) (Vibrio psychroerythus).